Consider the following 260-residue polypeptide: Probable carbohydrate esterase At4g34215 (260 aa).

The disordered stretch occupies residues 1–22 (MEGGSITPGEDKPEIQSPIPPN). Active-site residues include Ser31, Asp235, and His238.

It belongs to the carbohydrate esterase 6 family.

The protein is Probable carbohydrate esterase At4g34215 of Arabidopsis thaliana (Mouse-ear cress).